A 114-amino-acid polypeptide reads, in one-letter code: Probable non-functional T cell receptor beta variable 5-7 (114 aa).

An N-terminal signal peptide occupies residues 1-21; that stretch reads MGPGLLCWVLLCPLGEGPVDA. An Ig-like domain is found at 22–114; the sequence is GVTQSPTHLI…SALYLCASSL (93 aa). Cysteine 42 and cysteine 110 form a disulfide bridge. N-linked (GlcNAc...) asparagine glycosylation occurs at asparagine 90.

In terms of assembly, alpha-beta TR is a heterodimer composed of an alpha and beta chain; disulfide-linked. The alpha-beta TR is associated with the transmembrane signaling CD3 coreceptor proteins to form the TR-CD3 (TcR or TCR). The assembly of alpha-beta TR heterodimers with CD3 occurs in the endoplasmic reticulum where a single alpha-beta TR heterodimer associates with one CD3D-CD3E heterodimer, one CD3G-CD3E heterodimer and one CD247 homodimer forming a stable octameric structure. CD3D-CD3E and CD3G-CD3E heterodimers preferentially associate with TR alpha and TR beta chains, respectively. The association of the CD247 homodimer is the last step of TcR assembly in the endoplasmic reticulum and is required for transport to the cell surface.

The protein localises to the cell membrane. Its function is as follows. Probable non-functional open reading frame (ORF) of V region of the variable domain of T cell receptor (TR) beta chain. Non-functional ORF generally cannot participate in the synthesis of a productive T cell receptor (TR) chain due to altered V-(D)-J or switch recombination and/or splicing site (at mRNA level) and/or conserved amino acid change (protein level). Alpha-beta T cell receptors are antigen specific receptors which are essential to the immune response and are present on the cell surface of T lymphocytes. Recognize peptide-major histocompatibility (MH) (pMH) complexes that are displayed by antigen presenting cells (APC), a prerequisite for efficient T cell adaptive immunity against pathogens. Binding of alpha-beta TR to pMH complex initiates TR-CD3 clustering on the cell surface and intracellular activation of LCK that phosphorylates the ITAM motifs of CD3G, CD3D, CD3E and CD247 enabling the recruitment of ZAP70. In turn ZAP70 phosphorylates LAT, which recruits numerous signaling molecules to form the LAT signalosome. The LAT signalosome propagates signal branching to three major signaling pathways, the calcium, the mitogen-activated protein kinase (MAPK) kinase and the nuclear factor NF-kappa-B (NF-kB) pathways, leading to the mobilization of transcription factors that are critical for gene expression and essential for T cell growth and differentiation. The T cell repertoire is generated in the thymus, by V-(D)-J rearrangement. This repertoire is then shaped by intrathymic selection events to generate a peripheral T cell pool of self-MH restricted, non-autoaggressive T cells. Post-thymic interaction of alpha-beta TR with the pMH complexes shapes TR structural and functional avidity. This chain is Probable non-functional T cell receptor beta variable 5-7, found in Homo sapiens (Human).